The primary structure comprises 420 residues: MYTHVDVVGIAEASAALYVQKDRDRYLDVLTTIENFIYQHKCILTGESAHLLFLKKSIYLYEFYSDNVAEHSKALATLLYNLDPEYLTRYTVLITKIPNHWYVINVDQREFVRLYAIPAVKQHLPIPILPFHCTSALTQQDLFCLGPELQLIQIYSKLCNPNFVEEWPTLLDYEKNMRTLFLEQFPEKLEKTGGKKEKEEKHESIIKKIILEMVSTHQRIVVGGYIQKNLYNHVIKNRNRLQLITSLNIYEEKDIIQQFCDSNGLKIKICVNNPLLPTNPELRRLTIYFNNNDDQSYLIVDMYNTGSYELVPTNQINTLDNSFLIGTPFVQARFLLVEIWVLMLIAQQTKKDTKKIIQFFINQYETLMNSPWPSIEALFPSSSKRYLGNYVDPNALIKWAQLKLKRIPPFYPGRPDEESC.

Belongs to the asfivirus K421R family.

Its subcellular location is the virion. This is an uncharacterized protein from Ornithodoros (relapsing fever ticks).